A 199-amino-acid polypeptide reads, in one-letter code: Holliday junction branch migration complex subunit RuvA (199 aa).

The domain I stretch occupies residues 1–63 (MIGCLIGEVF…EDAQQLYGFS (63 aa)). The tract at residues 64–142 (DAQEKTIFRT…TLAQGTSSAA (79 aa)) is domain II. A flexible linker region spans residues 143-150 (ALPQIQFV). Residues 150–199 (VSNSPVAEAEAALQSLGYKPLEAQKAVAAVKADYTESADIIRAALKSMMK) form a domain III region.

This sequence belongs to the RuvA family. Homotetramer. Forms an RuvA(8)-RuvB(12)-Holliday junction (HJ) complex. HJ DNA is sandwiched between 2 RuvA tetramers; dsDNA enters through RuvA and exits via RuvB. An RuvB hexamer assembles on each DNA strand where it exits the tetramer. Each RuvB hexamer is contacted by two RuvA subunits (via domain III) on 2 adjacent RuvB subunits; this complex drives branch migration. In the full resolvosome a probable DNA-RuvA(4)-RuvB(12)-RuvC(2) complex forms which resolves the HJ.

Its subcellular location is the cytoplasm. In terms of biological role, the RuvA-RuvB-RuvC complex processes Holliday junction (HJ) DNA during genetic recombination and DNA repair, while the RuvA-RuvB complex plays an important role in the rescue of blocked DNA replication forks via replication fork reversal (RFR). RuvA specifically binds to HJ cruciform DNA, conferring on it an open structure. The RuvB hexamer acts as an ATP-dependent pump, pulling dsDNA into and through the RuvAB complex. HJ branch migration allows RuvC to scan DNA until it finds its consensus sequence, where it cleaves and resolves the cruciform DNA. This is Holliday junction branch migration complex subunit RuvA from Acinetobacter baumannii (strain ACICU).